Reading from the N-terminus, the 122-residue chain is Large ribosomal subunit protein eL34 (122 aa).

The protein belongs to the eukaryotic ribosomal protein eL34 family. In terms of assembly, component of the large ribosomal subunit. Mature ribosomes consist of a small (40S) and a large (60S) subunit. The 40S subunit contains about 32 different proteins and 1 molecule of RNA (18S). The 60S subunit contains 45 different proteins and 3 molecules of RNA (25S, 5.8S and 5S).

It localises to the cytoplasm. In terms of biological role, component of the ribosome, a large ribonucleoprotein complex responsible for the synthesis of proteins in the cell. The small ribosomal subunit (SSU) binds messenger RNAs (mRNAs) and translates the encoded message by selecting cognate aminoacyl-transfer RNA (tRNA) molecules. The large subunit (LSU) contains the ribosomal catalytic site termed the peptidyl transferase center (PTC), which catalyzes the formation of peptide bonds, thereby polymerizing the amino acids delivered by tRNAs into a polypeptide chain. The nascent polypeptides leave the ribosome through a tunnel in the LSU and interact with protein factors that function in enzymatic processing, targeting, and the membrane insertion of nascent chains at the exit of the ribosomal tunnel. This Candida albicans (strain SC5314 / ATCC MYA-2876) (Yeast) protein is Large ribosomal subunit protein eL34.